The chain runs to 189 residues: Dirigent protein 21 (189 aa).

The N-terminal stretch at M1–A19 is a signal peptide. N-linked (GlcNAc...) asparagine glycans are attached at residues N72 and N173.

This sequence belongs to the plant dirigent protein family. As to quaternary structure, homodimer.

It is found in the secreted. Its function is as follows. Dirigent proteins impart stereoselectivity on the phenoxy radical-coupling reaction, yielding optically active lignans from two molecules of coniferyl alcohol in the biosynthesis of lignans, flavonolignans, and alkaloids and thus plays a central role in plant secondary metabolism. This is Dirigent protein 21 (DIR21) from Arabidopsis thaliana (Mouse-ear cress).